Reading from the N-terminus, the 210-residue chain is Large ribosomal subunit protein uL4 (210 aa).

The interval 46 to 77 is disordered; sequence QGTHKSKERGEIAGSTKKIKKQKGTGTARAGS.

The protein belongs to the universal ribosomal protein uL4 family. Part of the 50S ribosomal subunit.

In terms of biological role, one of the primary rRNA binding proteins, this protein initially binds near the 5'-end of the 23S rRNA. It is important during the early stages of 50S assembly. It makes multiple contacts with different domains of the 23S rRNA in the assembled 50S subunit and ribosome. Forms part of the polypeptide exit tunnel. The chain is Large ribosomal subunit protein uL4 from Amoebophilus asiaticus (strain 5a2).